The primary structure comprises 397 residues: L-rhamnonate dehydratase (397 aa).

Substrate-binding residues include His25 and Arg51. Residues Asp217, Glu243, and Glu271 each contribute to the Mg(2+) site. His321 (proton acceptor) is an active-site residue. Position 341 (Glu341) interacts with substrate.

This sequence belongs to the mandelate racemase/muconate lactonizing enzyme family. RhamD subfamily. In terms of assembly, homooctamer; tetramer of dimers. The cofactor is Mg(2+).

It carries out the reaction L-rhamnonate = 2-dehydro-3-deoxy-L-rhamnonate + H2O. The protein operates within carbohydrate degradation; L-rhamnose degradation. Its function is as follows. Catalyzes the dehydration of L-rhamnonate to 2-keto-3-deoxy-L-rhamnonate (KDR). Also shows activity with L-lyxonate and L-mannonate, with much lower catalytic efficiency. Catalyzes the third step in an alternative pathway for rhamnose utilization that does not involve phosphorylated intermediates. The chain is L-rhamnonate dehydratase from Sphingomonas sp. (strain SKA58).